The sequence spans 546 residues: Chaperonin GroEL 4 (546 aa).

Residues 30-33 (TLGP), Lys51, 87-91 (DGTTT), Gly415, and Asp495 each bind ATP. The disordered stretch occupies residues 524 to 546 (APKDTPAAGQPGGPGAGGPGLDF). The span at 533–546 (QPGGPGAGGPGLDF) shows a compositional bias: gly residues.

It belongs to the chaperonin (HSP60) family. Forms a cylinder of 14 subunits composed of two heptameric rings stacked back-to-back. Interacts with the co-chaperonin GroES.

It is found in the cytoplasm. It catalyses the reaction ATP + H2O + a folded polypeptide = ADP + phosphate + an unfolded polypeptide.. In terms of biological role, together with its co-chaperonin GroES, plays an essential role in assisting protein folding. The GroEL-GroES system forms a nano-cage that allows encapsulation of the non-native substrate proteins and provides a physical environment optimized to promote and accelerate protein folding. The polypeptide is Chaperonin GroEL 4 (Paraburkholderia xenovorans (strain LB400)).